A 170-amino-acid polypeptide reads, in one-letter code: Large ribosomal subunit protein uL15 (170 aa).

A compositionally biased stretch (basic and acidic residues) spans 1 to 12; sequence MKLHDLRPAEGS. The disordered stretch occupies residues 1–50; the sequence is MKLHDLRPAEGSHRKRKRIGRGHGSGKVKTGGKGMMGQKARSGPGPYRTF. Positions 13-26 are enriched in basic residues; it reads HRKRKRIGRGHGSG.

It belongs to the universal ribosomal protein uL15 family. In terms of assembly, part of the 50S ribosomal subunit.

Binds to the 23S rRNA. The chain is Large ribosomal subunit protein uL15 from Chloroflexus aggregans (strain MD-66 / DSM 9485).